Here is an 833-residue protein sequence, read N- to C-terminus: Leucine--tRNA ligase (833 aa).

The short motif at 41–52 (PYPSGAGLHVGH) is the 'HIGH' region element. Residues 610–614 (KMSKS) carry the 'KMSKS' region motif. Lysine 613 serves as a coordination point for ATP.

This sequence belongs to the class-I aminoacyl-tRNA synthetase family.

The protein resides in the cytoplasm. The catalysed reaction is tRNA(Leu) + L-leucine + ATP = L-leucyl-tRNA(Leu) + AMP + diphosphate. This Streptococcus agalactiae serotype III (strain NEM316) protein is Leucine--tRNA ligase.